We begin with the raw amino-acid sequence, 151 residues long: Small ribosomal subunit protein uS15 (151 aa).

S21 and S32 each carry phosphoserine.

It belongs to the universal ribosomal protein uS15 family. As to quaternary structure, component of the small ribosomal subunit (SSU). Mature yeast ribosomes consist of a small (40S) and a large (60S) subunit. The 40S small subunit contains 1 molecule of ribosomal RNA (18S rRNA) and at least 33 different proteins. The large 60S subunit contains 3 rRNA molecules (25S, 5.8S and 5S rRNA) and at least 46 different proteins.

It localises to the cytoplasm. In terms of biological role, component of the ribosome, a large ribonucleoprotein complex responsible for the synthesis of proteins in the cell. The small ribosomal subunit (SSU) binds messenger RNAs (mRNAs) and translates the encoded message by selecting cognate aminoacyl-transfer RNA (tRNA) molecules. The large subunit (LSU) contains the ribosomal catalytic site termed the peptidyl transferase center (PTC), which catalyzes the formation of peptide bonds, thereby polymerizing the amino acids delivered by tRNAs into a polypeptide chain. The nascent polypeptides leave the ribosome through a tunnel in the LSU and interact with protein factors that function in enzymatic processing, targeting, and the membrane insertion of nascent chains at the exit of the ribosomal tunnel. In Schizosaccharomyces pombe (strain 972 / ATCC 24843) (Fission yeast), this protein is Small ribosomal subunit protein uS15 (rps13).